The sequence spans 156 residues: 6,7-dimethyl-8-ribityllumazine synthase (156 aa).

Residues Phe23, 57–59 (AFE), and 81–83 (AVI) each bind 5-amino-6-(D-ribitylamino)uracil. (2S)-2-hydroxy-3-oxobutyl phosphate is bound at residue 86–87 (ST). The active-site Proton donor is the His89. Phe114 is a 5-amino-6-(D-ribitylamino)uracil binding site. (2S)-2-hydroxy-3-oxobutyl phosphate is bound at residue Arg128.

This sequence belongs to the DMRL synthase family.

The enzyme catalyses (2S)-2-hydroxy-3-oxobutyl phosphate + 5-amino-6-(D-ribitylamino)uracil = 6,7-dimethyl-8-(1-D-ribityl)lumazine + phosphate + 2 H2O + H(+). It participates in cofactor biosynthesis; riboflavin biosynthesis; riboflavin from 2-hydroxy-3-oxobutyl phosphate and 5-amino-6-(D-ribitylamino)uracil: step 1/2. In terms of biological role, catalyzes the formation of 6,7-dimethyl-8-ribityllumazine by condensation of 5-amino-6-(D-ribitylamino)uracil with 3,4-dihydroxy-2-butanone 4-phosphate. This is the penultimate step in the biosynthesis of riboflavin. In Campylobacter lari (strain RM2100 / D67 / ATCC BAA-1060), this protein is 6,7-dimethyl-8-ribityllumazine synthase.